The chain runs to 853 residues: Putative dipeptidyl aminopeptidase C14C4.15c (853 aa).

The interval 1–26 is disordered; that stretch reads MNAYEGDTLNNHGKSSTRQHWRKRSA. The Cytoplasmic portion of the chain corresponds to 1–65; sequence MNAYEGDTLN…AKKRRRKKHR (65 aa). Basic residues predominate over residues 15 to 25; it reads SSTRQHWRKRS. The chain crosses the membrane as a helical; Signal-anchor for type II membrane protein span at residues 66 to 86; sequence YIYLAVCLFFLASVLSCAIIF. Over 87 to 853 the chain is Lumenal; sequence RFYLHTNREN…SGHFHHALYC (767 aa). N-linked (GlcNAc...) asparagine glycans are attached at residues Asn96, Asn102, Asn472, Asn483, and Asn613. Active-site charge relay system residues include Ser719, Asp795, and His828.

Belongs to the peptidase S9B family.

The protein resides in the vacuole membrane. In Schizosaccharomyces pombe (strain 972 / ATCC 24843) (Fission yeast), this protein is Putative dipeptidyl aminopeptidase C14C4.15c.